The following is a 319-amino-acid chain: Acetyl-coenzyme A carboxylase carboxyl transferase subunit alpha (319 aa).

The CoA carboxyltransferase C-terminal domain maps to 32-293; it reads NVDAEVRALR…KAVLLNELDA (262 aa).

This sequence belongs to the AccA family. In terms of assembly, acetyl-CoA carboxylase is a heterohexamer composed of biotin carboxyl carrier protein (AccB), biotin carboxylase (AccC) and two subunits each of ACCase subunit alpha (AccA) and ACCase subunit beta (AccD).

It localises to the cytoplasm. The enzyme catalyses N(6)-carboxybiotinyl-L-lysyl-[protein] + acetyl-CoA = N(6)-biotinyl-L-lysyl-[protein] + malonyl-CoA. The protein operates within lipid metabolism; malonyl-CoA biosynthesis; malonyl-CoA from acetyl-CoA: step 1/1. Its function is as follows. Component of the acetyl coenzyme A carboxylase (ACC) complex. First, biotin carboxylase catalyzes the carboxylation of biotin on its carrier protein (BCCP) and then the CO(2) group is transferred by the carboxyltransferase to acetyl-CoA to form malonyl-CoA. This is Acetyl-coenzyme A carboxylase carboxyl transferase subunit alpha from Xanthomonas campestris pv. campestris (strain B100).